Consider the following 341-residue polypeptide: Keratin-associated protein 29-1 (341 aa).

7 tandem repeats follow at residues 5 to 9 (CCPGN), 115 to 119 (CCQEK), 120 to 124 (CCDAS), 150 to 154 (CCDAG), 240 to 244 (CCVPS), 276 to 280 (CCKPA), and 307 to 311 (CCVTG). A 7 X 5 AA repeats of C-C-X(3) region spans residues 5–311 (CCPGNTTAIP…GCKSACCVTG (307 aa)).

Belongs to the KRTAP type 10 family.

The sequence is that of Keratin-associated protein 29-1 (KRTAP29-1) from Homo sapiens (Human).